We begin with the raw amino-acid sequence, 192 residues long: Urease accessory protein UreE (192 aa).

Residues 170–192 form a disordered region; the sequence is EHHGHSHSHSHDHVHDEKCGHKH. Positions 178–192 are enriched in basic and acidic residues; sequence HSHDHVHDEKCGHKH.

It belongs to the UreE family.

The protein resides in the cytoplasm. Its function is as follows. Involved in urease metallocenter assembly. Binds nickel. Probably functions as a nickel donor during metallocenter assembly. The polypeptide is Urease accessory protein UreE (Cupriavidus necator (strain ATCC 17699 / DSM 428 / KCTC 22496 / NCIMB 10442 / H16 / Stanier 337) (Ralstonia eutropha)).